The sequence spans 487 residues: 3-octaprenyl-4-hydroxybenzoate carboxy-lyase (487 aa).

Asn-172 is a Mn(2+) binding site. Residues 175–177, 189–191, and 194–195 each bind prenylated FMN; these read IYR, RWL, and RG. Glu-238 lines the Mn(2+) pocket. Residue Asp-287 is the Proton donor of the active site.

This sequence belongs to the UbiD family. As to quaternary structure, homohexamer. Prenylated FMN is required as a cofactor. The cofactor is Mn(2+).

It is found in the cell membrane. The catalysed reaction is a 4-hydroxy-3-(all-trans-polyprenyl)benzoate + H(+) = a 2-(all-trans-polyprenyl)phenol + CO2. The protein operates within cofactor biosynthesis; ubiquinone biosynthesis. Its function is as follows. Catalyzes the decarboxylation of 3-octaprenyl-4-hydroxy benzoate to 2-octaprenylphenol, an intermediate step in ubiquinone biosynthesis. In Nitrosomonas eutropha (strain DSM 101675 / C91 / Nm57), this protein is 3-octaprenyl-4-hydroxybenzoate carboxy-lyase.